We begin with the raw amino-acid sequence, 406 residues long: MSQPITRENFDEWMIPVYAPAPFIPVRGEGSRLWDQQGKEYIDFAGGIAVNALGHAHPELREALNEQASKFWHTGNGYTNESVLRLAKKLIDATFADRVFFCNSGAEANEAALKLARKFAHDRYGSHKSGIVAFKNAFHGRTLFTVSAGGQPAYSQDFAPLPPDIRHAAYNDINSASALIDDSTCAVIVEPIQGEGGVVPASNAFLQGLRELCDRHNALLIFDEVQTGVGRTGELYAYMHYGVTPDLLTTAKALGGGFPVGALLATEECASVMTVGTHGTTYGGNPLASAVAGKVLELINTPEMLNGVKQRHDWFVERLNIINHRYGLFNEVRGLGLLIGCVLNADYAGQAKQISQEAAKAGVMVLIAGGNVVRFAPALNVSEEEVTTGLDRFAVACEHFVSRGSS.

Residue Lys-252 is modified to N6-(pyridoxal phosphate)lysine.

This sequence belongs to the class-III pyridoxal-phosphate-dependent aminotransferase family. AstC subfamily. The cofactor is pyridoxal 5'-phosphate.

The enzyme catalyses N(2)-succinyl-L-ornithine + 2-oxoglutarate = N-succinyl-L-glutamate 5-semialdehyde + L-glutamate. The protein operates within amino-acid degradation; L-arginine degradation via AST pathway; L-glutamate and succinate from L-arginine: step 3/5. Its function is as follows. Catalyzes the transamination of N(2)-succinylornithine and alpha-ketoglutarate into N(2)-succinylglutamate semialdehyde and glutamate. Can also act as an acetylornithine aminotransferase. This Escherichia coli O157:H7 protein is Succinylornithine transaminase.